We begin with the raw amino-acid sequence, 471 residues long: Transcription initiation factor TFIID subunit 7-like (471 aa).

3 disordered regions span residues 1 to 84 (MERG…RQGT), 192 to 211 (SPEGEPHSPPEEPVVSTGPT), and 328 to 377 (EMMG…EELE). A Phosphoserine modification is found at S199. Residues 347–377 (GDDDDDEDEDDEDYGNEKEEEETDNSEEELE) show a composition bias toward acidic residues. Positions 358–433 (EDYGNEKEEE…QKELLRKVEN (76 aa)) form a coiled coil.

Belongs to the TAF7 family. In terms of assembly, TFIID is composed of TATA binding protein (TBP) and a number of TBP-associated factors (TAFs). TAF7L may replace TAF7 in a spermatogenesis-specific form of TFIID. Interacts with TBP; the interaction occurs in a sub-population of cells (pachytene and haploid round spermatids) and is developmentally regulated through differential intracellular localization of the two proteins. Interacts with TAF1. In terms of tissue distribution, testis-specific (at protein level). Expressed during spermatogenesis from spermatogonia stage up to the stage of round spermatids.

It localises to the nucleus. The protein resides in the cytoplasm. Probably functions as a spermatogenesis-specific component of the DNA-binding general transcription factor complex TFIID, a multimeric protein complex that plays a central role in mediating promoter responses to various activators and repressors. May play a role in spermatogenesis. The chain is Transcription initiation factor TFIID subunit 7-like (Taf7l) from Mus musculus (Mouse).